The following is a 543-amino-acid chain: Zinc finger protein 852 (543 aa).

Residues 8-82 (VAYEDLSEDY…TSGGLFGVVP (75 aa)) form the KRAB domain. S145 is modified (phosphoserine). C2H2-type zinc fingers lie at residues 159 to 181 (YRCD…RRIH), 187 to 209 (YECN…LRTH), 215 to 237 (YECS…QRLH), 243 to 265 (YKCN…QRTH), 271 to 293 (YECK…QFLH), 299 to 321 (YKCN…QRTH), 327 to 349 (YKCN…QSLH), 355 to 377 (YKCS…ERIH), 383 to 405 (FKCS…QRLH), 411 to 433 (YKCN…QRIH), 439 to 461 (YECN…QRTH), and 467 to 489 (YKCN…QRVH).

The protein belongs to the krueppel C2H2-type zinc-finger protein family.

Its subcellular location is the nucleus. In terms of biological role, may be involved in transcriptional regulation. The chain is Zinc finger protein 852 (ZNF852) from Homo sapiens (Human).